A 602-amino-acid polypeptide reads, in one-letter code: Threonine--tRNA ligase (602 aa).

The tract at residues 208–499 is catalytic; that stretch reads DHRKLGTELK…LTEHCAGEFP (292 aa). Zn(2+)-binding residues include Cys300, His351, and His476.

This sequence belongs to the class-II aminoacyl-tRNA synthetase family. As to quaternary structure, homodimer. It depends on Zn(2+) as a cofactor.

The protein localises to the cytoplasm. It catalyses the reaction tRNA(Thr) + L-threonine + ATP = L-threonyl-tRNA(Thr) + AMP + diphosphate + H(+). Functionally, catalyzes the attachment of threonine to tRNA(Thr) in a two-step reaction: L-threonine is first activated by ATP to form Thr-AMP and then transferred to the acceptor end of tRNA(Thr). Also edits incorrectly charged L-seryl-tRNA(Thr). This Campylobacter jejuni subsp. jejuni serotype O:6 (strain 81116 / NCTC 11828) protein is Threonine--tRNA ligase.